A 297-amino-acid chain; its full sequence is AKT-interacting protein (297 aa).

Polar residues predominate over residues 1–13; the sequence is MNLNPFWSMSTNT. The interval 1-45 is disordered; sequence MNLNPFWSMSTNTGRKRSDGEEQSGEQQQQQRASPARPSFGKKQL. The segment covering 25–39 has biased composition (low complexity); the sequence is GEQQQQQRASPARPS. Positions 79–227 constitute a UBC core domain; sequence YLEYSLLAEF…VVDSVKLCNS (149 aa). The disordered stretch occupies residues 262–297; it reads KRRPEDHHKGLQVSGLSWVKPGSTQPFSKDDNPPQN.

It belongs to the ubiquitin-conjugating enzyme family. FTS subfamily.

Its subcellular location is the cytoplasm. It is found in the cell membrane. May function to promote vesicle trafficking and/or fusion. May also regulate apoptosis. This is AKT-interacting protein (aktip) from Salmo salar (Atlantic salmon).